The following is a 524-amino-acid chain: Ribonuclease Y (524 aa).

Residues 3-23 traverse the membrane as a helical segment; sequence IVINLLLLVLAALVAFVAGFF. Positions 214–280 constitute a KH domain; that stretch reads ALSVVHIQSD…KLTLKKLLAD (67 aa). The HD domain occupies 340-432; the sequence is LLQHSREVAM…VDAANTISLS (93 aa).

It belongs to the RNase Y family.

It is found in the cell membrane. Functionally, endoribonuclease that initiates mRNA decay. This chain is Ribonuclease Y, found in Chlorobium chlorochromatii (strain CaD3).